We begin with the raw amino-acid sequence, 98 residues long: Small ribosomal subunit protein bS6 (98 aa).

Belongs to the bacterial ribosomal protein bS6 family.

Its function is as follows. Binds together with bS18 to 16S ribosomal RNA. This Lactobacillus acidophilus (strain ATCC 700396 / NCK56 / N2 / NCFM) protein is Small ribosomal subunit protein bS6.